A 248-amino-acid chain; its full sequence is Proteasome subunit alpha (248 aa).

The segment at 229–248 (LLEADGATTEAESSAEEEDE) is disordered.

The protein belongs to the peptidase T1A family. The 20S proteasome core is composed of 14 alpha and 14 beta subunits that assemble into four stacked heptameric rings, resulting in a barrel-shaped structure. The two inner rings, each composed of seven catalytic beta subunits, are sandwiched by two outer rings, each composed of seven alpha subunits. The catalytic chamber with the active sites is on the inside of the barrel. Has a gated structure, the ends of the cylinder being occluded by the N-termini of the alpha-subunits. Is capped by the proteasome-associated ATPase, ARC.

Its subcellular location is the cytoplasm. It functions in the pathway protein degradation; proteasomal Pup-dependent pathway. With respect to regulation, the formation of the proteasomal ATPase ARC-20S proteasome complex, likely via the docking of the C-termini of ARC into the intersubunit pockets in the alpha-rings, may trigger opening of the gate for substrate entry. Interconversion between the open-gate and close-gate conformations leads to a dynamic regulation of the 20S proteasome proteolysis activity. Functionally, component of the proteasome core, a large protease complex with broad specificity involved in protein degradation. This is Proteasome subunit alpha from Streptomyces scabiei (strain 87.22).